Reading from the N-terminus, the 274-residue chain is Nitrogenase iron protein (274 aa).

ATP is bound at residue 8–15; that stretch reads GKGGIGKS. Position 94 (Cys94) interacts with [4Fe-4S] cluster. Position 97 is an ADP-ribosylarginine; by dinitrogenase reductase ADP-ribosyltransferase (Arg97). Cys131 contacts [4Fe-4S] cluster.

This sequence belongs to the NifH/BchL/ChlL family. Homodimer. [4Fe-4S] cluster serves as cofactor. In terms of processing, the reversible ADP-ribosylation of Arg-97 inactivates the nitrogenase reductase and regulates nitrogenase activity.

The enzyme catalyses N2 + 8 reduced [2Fe-2S]-[ferredoxin] + 16 ATP + 16 H2O = H2 + 8 oxidized [2Fe-2S]-[ferredoxin] + 2 NH4(+) + 16 ADP + 16 phosphate + 6 H(+). Functionally, the key enzymatic reactions in nitrogen fixation are catalyzed by the nitrogenase complex, which has 2 components: the iron protein and the molybdenum-iron protein. This Azobacteroides pseudotrichonymphae genomovar. CFP2 protein is Nitrogenase iron protein.